The primary structure comprises 306 residues: MRVVFMGTPEFSVPILTAIIGHGYEVVAAYTQPPRPAGRRGLELTRSPVHEKAEQFGIPVFTPTSLKGAEEQDVFASLEADVAIVVAYGLLLPKAILDAPRLGCYNGHASLLPRWRGAAPIQRAIMAGDAETGMMIMKMDEGLDTGPVAMAEKVAITPDMTAGELHDRLSMIGADLMIRALGALERESLALQPQAEEGVTYAAKIDKAEARIDWSKPAKDVHNSIRGLSPFPGAWCEMEINGAVERVKLQRSTLGEGSGAPGTVLDDRLTIACGEGAVRLATLQRSGGKPLPAQEFLRGQRVTKVL.

110-113 (SLLP) contacts (6S)-5,6,7,8-tetrahydrofolate.

It belongs to the Fmt family.

The enzyme catalyses L-methionyl-tRNA(fMet) + (6R)-10-formyltetrahydrofolate = N-formyl-L-methionyl-tRNA(fMet) + (6S)-5,6,7,8-tetrahydrofolate + H(+). Functionally, attaches a formyl group to the free amino group of methionyl-tRNA(fMet). The formyl group appears to play a dual role in the initiator identity of N-formylmethionyl-tRNA by promoting its recognition by IF2 and preventing the misappropriation of this tRNA by the elongation apparatus. This Brucella abortus (strain S19) protein is Methionyl-tRNA formyltransferase.